The primary structure comprises 545 residues: Labda-7,13-dienyl diphosphate synthase (545 aa).

The DXDDTA motif signature appears at 315–320 (DADDTA). An RXXDGSW motif motif is present at residues 444–450 (RRTDGSW). Residues 526 to 545 (LPAPAPVPPGFDAARTGPAD) form a disordered region.

This sequence belongs to the terpene synthase family. Mg(2+) is required as a cofactor.

The catalysed reaction is (2E,6E,10E)-geranylgeranyl diphosphate = (13E)-labda-7,13-dien-15-yl diphosphate. Involved in the biosynthesis of the labdane-type bicyclic diterpene labda-7,13(16),14-triene. Catalyzes the conversion of geranylgeranyl diphosphate (GGDP) into labda-7,13(E)-dienyl diphosphate. This Streptomyces clavuligerus protein is Labda-7,13-dienyl diphosphate synthase.